We begin with the raw amino-acid sequence, 1487 residues long: Protein clueless (1487 aa).

2 disordered regions span residues 1 to 94 (MALE…NGDA) and 110 to 140 (GATA…EAAA). The segment covering 56–65 (TKKKGKKNRN) has biased composition (basic residues). Over residues 111–126 (ATAAAGATEAAAEVGS) the composition is skewed to low complexity. Phosphoserine is present on Ser-284. Residues 438 to 680 (RAEDAFSSKL…RTFPPDVNFL (243 aa)) enclose the Clu domain. The segment covering 739–785 (QAEKELPSITEKQEEPEKEQAEKSSAEQPEKEKEKEKDKEDEQKESK) has biased composition (basic and acidic residues). 2 disordered regions span residues 739–794 (QAEK…TKSA) and 980–1040 (VSSE…TAST). The segment covering 988–1005 (KQSRNNGGKHNKHNKSNK) has biased composition (basic residues). Residues 1009–1019 (PQSTSAAAATQ) are compositionally biased toward polar residues. The span at 1020–1040 (NGHSSTAANGSANSAANTAST) shows a compositional bias: low complexity. TPR repeat units follow at residues 1140–1173 (AYNF…LNNV), 1266–1299 (ALID…NLKY), and 1301–1334 (GNKA…EKET). The segment at 1456–1487 (DTEQPKEGSEVEGATATQLTNGSEDSTTTVSS) is disordered. Over residues 1470–1487 (TATQLTNGSEDSTTTVSS) the composition is skewed to polar residues.

The protein belongs to the CLU family.

The protein localises to the cytoplasm. In terms of biological role, mRNA-binding protein involved in proper cytoplasmic distribution of mitochondria. The polypeptide is Protein clueless (Drosophila mojavensis (Fruit fly)).